The primary structure comprises 1522 residues: Myosin-15 (1522 aa).

One can recognise a Myosin N-terminal SH3-like domain in the interval 12–61 (RKGDKVWVEDKDLAWIAADVLDSFDNKLHVETSTGKKVFVSPEKLFRRDP). The Myosin motor domain maps to 67-737 (NGVDDMTKLT…QIGILDSRRA (671 aa)). ATP is bound by residues 161 to 168 (GESGAGKT) and 214 to 222 (NDNSSRFGK). Actin-binding regions lie at residues 499-533 (LIEK…FQNF), 535-558 (FHPR…AGKV), 593-618 (FPSA…KQQL), and 618-640 (LQAL…KPNS). 5 IQ domains span residues 763–792 (ARAS…AAAA), 788–817 (NAAA…AAIV), 811–840 (LVSA…HRAA), 836–865 (EHRA…SIIA), and 859–888 (RQSS…VANE). Residues 889–1059 (AGALRLAKTK…NQVLMQKTLI (171 aa)) are a coiled coil. The 293-residue stretch at 1164–1456 (NIIIEGINEA…VSQMRVLVDK (293 aa)) folds into the Dilute domain.

Belongs to the TRAFAC class myosin-kinesin ATPase superfamily. Myosin family. Plant myosin class XI subfamily. Homodimer. Interacts with MYOB1 and MYOB7. Interacts with WIT1 and WIT2. Core component of the LINC complex which is composed of inner nuclear membrane SUN domain-containing proteins coupled to outer nuclear membrane WIP and WIT proteins. The LINC complex also involves nucleoskeletal proteins CRWN/LINC and possibly KAKU4 and the cytoskeletal myosin KAKU1.

Its subcellular location is the cytoplasm. It is found in the nucleus membrane. Its function is as follows. Myosin heavy chain that is required for the cell cycle-regulated transport of various organelles and proteins for their segregation. Functions by binding with its tail domain to receptor proteins on organelles and exerting force with its N-terminal motor domain against actin filaments, thereby transporting its cargo along polarized actin cables. Involved in trafficking of Golgi stacks and mitochondria. Plays a role in nuclear shape determination. Drives nuclear movement along actin filaments. As component of the SUN-WIP-WIT2-KAKU1 complex, mediates the transfer of cytoplasmic forces to the nuclear envelope (NE), leading to nuclear shape changes. This chain is Myosin-15 (XI-I), found in Arabidopsis thaliana (Mouse-ear cress).